Consider the following 98-residue polypeptide: Acylphosphatase-1 (98 aa).

Positions 8–98 (SVDYEVFGKV…LEHSTFSICK (91 aa)) constitute an Acylphosphatase-like domain. Catalysis depends on residues Arg-23 and Asn-41.

Belongs to the acylphosphatase family.

The catalysed reaction is an acyl phosphate + H2O = a carboxylate + phosphate + H(+). The polypeptide is Acylphosphatase-1 (acyp1) (Xenopus tropicalis (Western clawed frog)).